The primary structure comprises 920 residues: Anillin-related medial ring protein mid1 (920 aa).

Residues 1–452 (MKEQEFSYRE…LSSEDLRHPS (452 aa)) form a disordered region. 2 positions are modified to phosphoserine: Ser15 and Ser24. A Phosphothreonine modification is found at Thr34. A phosphoserine mark is found at Ser46 and Ser62. Residues 69 to 81 (LNVATDLLESLDL) carry the Nuclear export sequence (NES) 1 motif. Ser95 bears the Phosphoserine mark. Over residues 461–481 (RTYSNYCENEPNKSSQSLVSS) the composition is skewed to polar residues. Phosphoserine is present on Ser531. Residues 538 to 561 (DLPSQDKSTSYEVPNGTENQSPRP) are disordered. A compositionally biased stretch (polar residues) spans 542-561 (QDKSTSYEVPNGTENQSPRP). Positions 551–920 (PNGTENQSPR…WLQEYVNFMA (370 aa)) are cryptic lipid-binding C2 domain. The Nuclear localization sequence (NLS) motif lies at 681–710 (RKFFDKLFNRRKKRKLNKAAAVENSKAKKS). Residues 763–773 (LGNLTLTCLYI) carry the Nuclear export sequence (NES) 2 motif. One can recognise a PH domain in the interval 802–901 (LYNEGYLYRL…WLQVMNSRSF (100 aa)).

As to quaternary structure, homodimer. Interacts with blt1 and cdr2. Interacts with gef2. Interacts with plo1 and rng2. Interacts with fhk2 and sep1. Interacts with clp1. Post-translationally, phosphorylated. At the onset of mitosis, becomes hyperphosphorylated, leaves the nucleus, and forms a medial ring. Phosphorylation by plo1 and other kinases may contribute to solubilizing mid1 for export from the nucleus. Phosphorylation by sid2 drives removal from the cortex at the actomyosin contractile ring constriction onset.

It localises to the nucleus. It is found in the cytoplasm. The protein resides in the cell cortex. The protein localises to the cytoskeleton. Scaffold protein that anchors the contractile ring (CR) at the cell equator during cytokinesis. At the onset of mitosis, membrane-bound oligomers of mid1 assemble recruitment platforms for cytokinetic ring components at the medial cortex and stabilize the ring position during its compaction. Recruits dephosphorylated myo2, but also rng2, clp1 and cdc15 to nodes and to place cytokinetic nodes around the cell equator the medial cortex to promote the ring assembly in cooperation with F-actin. Necessary to stabilize the mitotic spindle perpendicular to the axis of cell division. Also recruits the cdr2 kinase to the CR. In terms of biological role, in the nucleus, binds to the promoter regions of M-G1 transcribed genes to negatively regulate their expression. This is Anillin-related medial ring protein mid1 from Schizosaccharomyces pombe (strain 972 / ATCC 24843) (Fission yeast).